The primary structure comprises 320 residues: Glycerol-3-phosphate dehydrogenase [NAD(P)+] (320 aa).

The NADPH site is built by Phe-11, Arg-30, and Lys-102. Residues Lys-102, Gly-130, and Ser-132 each coordinate sn-glycerol 3-phosphate. NADPH is bound at residue Ala-134. Lys-185, Asp-238, Ser-248, Arg-249, and Asn-250 together coordinate sn-glycerol 3-phosphate. Residue Lys-185 is the Proton acceptor of the active site. Arg-249 contacts NADPH. An NADPH-binding site is contributed by Glu-270.

It belongs to the NAD-dependent glycerol-3-phosphate dehydrogenase family.

It localises to the cytoplasm. The enzyme catalyses sn-glycerol 3-phosphate + NAD(+) = dihydroxyacetone phosphate + NADH + H(+). It carries out the reaction sn-glycerol 3-phosphate + NADP(+) = dihydroxyacetone phosphate + NADPH + H(+). It participates in membrane lipid metabolism; glycerophospholipid metabolism. Its function is as follows. Catalyzes the reduction of the glycolytic intermediate dihydroxyacetone phosphate (DHAP) to sn-glycerol 3-phosphate (G3P), the key precursor for phospholipid synthesis. The sequence is that of Glycerol-3-phosphate dehydrogenase [NAD(P)+] from Ruegeria sp. (strain TM1040) (Silicibacter sp.).